Consider the following 323-residue polypeptide: Ribose-phosphate pyrophosphokinase 2 (323 aa).

ATP-binding positions include 43–45 (DGE) and 102–103 (RQ). Mg(2+)-binding residues include His136 and Asp177. Residue Lys200 is part of the active site. D-ribose 5-phosphate-binding positions include Arg202, Asp226, and 230-234 (DTAGT).

The protein belongs to the ribose-phosphate pyrophosphokinase family. Class I subfamily. In terms of assembly, homohexamer. The cofactor is Mg(2+).

The protein resides in the cytoplasm. The enzyme catalyses D-ribose 5-phosphate + ATP = 5-phospho-alpha-D-ribose 1-diphosphate + AMP + H(+). It participates in metabolic intermediate biosynthesis; 5-phospho-alpha-D-ribose 1-diphosphate biosynthesis; 5-phospho-alpha-D-ribose 1-diphosphate from D-ribose 5-phosphate (route I): step 1/1. Functionally, involved in the biosynthesis of the central metabolite phospho-alpha-D-ribosyl-1-pyrophosphate (PRPP) via the transfer of pyrophosphoryl group from ATP to 1-hydroxyl of ribose-5-phosphate (Rib-5-P). This Enterococcus faecalis (strain ATCC 700802 / V583) protein is Ribose-phosphate pyrophosphokinase 2.